Here is a 71-residue protein sequence, read N- to C-terminus: uncharacterized protein (71 aa).

The interval 1 to 71 is disordered; that stretch reads MLFETLKSLS…AFFSRPFYSE (71 aa). Positions 7–33 are enriched in polar residues; the sequence is KSLSQQNGGQFSDEQSFESPISSSFNG. Over residues 35 to 65 the composition is skewed to low complexity; that stretch reads SMPFGSPSSTMSSSYKGNTNSSTKSSSAFFS.

This is an uncharacterized protein from Dictyostelium discoideum (Social amoeba).